We begin with the raw amino-acid sequence, 292 residues long: MESRVLFSSQFNFPVNSPFKTRETSIAPLTPSRNVLSFSFRSPAERCAMRIVPLVKAASSTPQIVAEVDGSSHEPRRKKLAVFVSGGGSNFRKIHEGCSDGSVNGDVVLLVTNKKDCGGAEYARSNGIPVLVFPKAKREPSDGLSPSELVDVLRKYGVDFVLLAGYLKLIPVELVQAFPKRILNIHPALLPAFGGKGLYGIKVHKAVLESGARYSGPTIHFVNEEYDTGRILAQSAVRVIANDTPEELAKRVLHEEHKLYVEVVGAICEERIKWREDGVPLIQNKQNPDEYY.

The N-terminal 65 residues, 1-65, are a transit peptide targeting the chloroplast; it reads MESRVLFSSQ…KAASSTPQIV (65 aa). 88 to 90 serves as a coordination point for N(1)-(5-phospho-beta-D-ribosyl)glycinamide; sequence GSN. (6R)-10-formyltetrahydrofolate contacts are provided by residues 167–170 and Asn-184; that span reads LKLI. His-186 acts as the Proton donor in catalysis. Asp-227 contacts (6R)-10-formyltetrahydrofolate. Glu-256 is a binding site for N(1)-(5-phospho-beta-D-ribosyl)glycinamide.

It belongs to the GART family.

The protein localises to the plastid. The protein resides in the chloroplast. It carries out the reaction N(1)-(5-phospho-beta-D-ribosyl)glycinamide + (6R)-10-formyltetrahydrofolate = N(2)-formyl-N(1)-(5-phospho-beta-D-ribosyl)glycinamide + (6S)-5,6,7,8-tetrahydrofolate + H(+). The protein operates within purine metabolism; IMP biosynthesis via de novo pathway; N(2)-formyl-N(1)-(5-phospho-D-ribosyl)glycinamide from N(1)-(5-phospho-D-ribosyl)glycinamide (10-formyl THF route): step 1/1. In Arabidopsis thaliana (Mouse-ear cress), this protein is Phosphoribosylglycinamide formyltransferase, chloroplastic (PUR3).